The sequence spans 229 residues: MGAAYFDQFKVVDLIAITNSSMMMMLAVAVALILLKGNRLIPNRWQAVMESIYDHFHGLVKDNSGPQYFPFVFTLFIFIVFLNILGLFPYVFTVTVHIVVTLGLSFSIVIGVTLGGLWKFKWNFLSILMPAGAPLALAPLLVLIETVSYISRAISLGVRLAANLSAGHLLFAILAGFGFNMLTTAGVFNIFPVLIMVFISLLEAAVAVIQAYVFSLLTTIYLADTIVLH.

Helical transmembrane passes span 14-34, 68-88, 98-118, 124-144, 157-179, and 189-209; these read LIAITNSSMMMMLAVAVALIL, YFPFVFTLFIFIVFLNILGLF, IVVTLGLSFSIVIGVTLGGLW, FLSILMPAGAPLALAPLLVLI, GVRLAANLSAGHLLFAILAGFGF, and NIFPVLIMVFISLLEAAVAVI.

The protein belongs to the ATPase A chain family. F-type ATPases have 2 components, CF(1) - the catalytic core - and CF(0) - the membrane proton channel. CF(1) has five subunits: alpha(3), beta(3), gamma(1), delta(1), epsilon(1). CF(0) has three main subunits: a, b and c.

Its subcellular location is the mitochondrion inner membrane. Its function is as follows. Mitochondrial membrane ATP synthase (F(1)F(0) ATP synthase or Complex V) produces ATP from ADP in the presence of a proton gradient across the membrane which is generated by electron transport complexes of the respiratory chain. F-type ATPases consist of two structural domains, F(1) - containing the extramembraneous catalytic core and F(0) - containing the membrane proton channel, linked together by a central stalk and a peripheral stalk. During catalysis, ATP synthesis in the catalytic domain of F(1) is coupled via a rotary mechanism of the central stalk subunits to proton translocation. Key component of the proton channel; it may play a direct role in the translocation of protons across the membrane. In Metridium senile (Brown sea anemone), this protein is ATP synthase subunit a (ATPASE6).